The following is a 1050-amino-acid chain: Toll-like receptor 7 (1050 aa).

The signal sequence occupies residues Met-1–Gly-26. The Extracellular segment spans residues Phe-27–Asp-837. 20 LRR repeats span residues Ile-42–Pro-64, Thr-65–Arg-87, Asn-89–Val-111, Leu-126–Ser-149, His-151–Glu-170, Leu-171–Ile-195, Met-203–Asn-226, Leu-228–Asn-247, Leu-248–Cys-273, Asn-275–Leu-289, Thr-290–Asn-312, Arg-314–His-337, Leu-339–His-364, Leu-369–Val-392, Leu-396–His-419, Glu-421–Gly-443, His-493–His-516, Leu-517–Leu-542, Arg-543–Glu-565, and Gln-567–Met-589. Residues Asn-66 and Asn-69 are each glycosylated (N-linked (GlcNAc...) asparagine). Asn-167, Asn-190, and Asn-215 each carry an N-linked (GlcNAc...) asparagine glycan. Asn-387 is a glycosylation site (N-linked (GlcNAc...) asparagine). N-linked (GlcNAc...) asparagine glycans are attached at residues Asn-524 and Asn-535. Asn-591 carries an N-linked (GlcNAc...) asparagine glycan. LRR repeat units lie at residues Leu-596–Ser-619, Asp-620–Asp-645, Leu-650–Gly-673, Pro-675–Leu-698, Leu-699–Cys-722, Lys-724–Asp-746, Ala-747–Glu-770, and Leu-773–Val-796. 2 N-linked (GlcNAc...) asparagine glycosylation sites follow: Asn-680 and Asn-721. Residue Asn-800 is glycosylated (N-linked (GlcNAc...) asparagine). The helical transmembrane segment at Leu-838 to Met-858 threads the bilayer. Residues Thr-859–Val-1050 lie on the Cytoplasmic side of the membrane. One can recognise a TIR domain in the interval Ser-890–Leu-1034.

It belongs to the Toll-like receptor family. In terms of assembly, homodimer. Interacts with MYD88 via their respective TIR domains. Interacts with UNC93B1. Interacts with SMPDL3B. In terms of processing, the first cleavage is performed by asparagine endopeptidase or cathepsin family members. This initial cleavage event is followed by a trimming event that is solely cathepsin mediated and required for optimal receptor signaling.

It localises to the endosome membrane. The protein resides in the endoplasmic reticulum membrane. Its subcellular location is the lysosome. It is found in the cytoplasmic vesicle. The protein localises to the phagosome. Its activity is regulated as follows. Activated by guanosine analogs including deoxyguanosine, 7-thia-8-oxoguanosine or 7-deazaguanosine in a RNA-independent manner. Functionally, endosomal receptor that plays a key role in innate and adaptive immunity. Controls host immune response against pathogens through recognition of uridine-containing single strand RNAs (ssRNAs) of viral origin or guanosine analogs. Upon binding to agonists, undergoes dimerization that brings TIR domains from the two molecules into direct contact, leading to the recruitment of TIR-containing downstream adapter MYD88 through homotypic interaction. In turn, the Myddosome signaling complex is formed involving IRAK4, IRAK1, TRAF6, TRAF3 leading to activation of downstream transcription factors NF-kappa-B and IRF7 to induce pro-inflammatory cytokines and interferons, respectively. In plasmacytoid dendritic cells, RNASET2 endonuclease cooperates with PLD3 or PLD4 5'-&gt;3' exonucleases to process RNA and release 2',3'-cyclic guanosine monophosphate (2',3'-cGMP) and cytidine-rich RNA fragments that occupy TLR7 ligand-binding pockets and trigger a signaling-competent state. This Mus musculus (Mouse) protein is Toll-like receptor 7 (Tlr7).